Here is a 176-residue protein sequence, read N- to C-terminus: MAMTGLNTAGSDRDYDTQSLNRELQDKGFLLTTTEDLINWARTGSLHWMTFGLACCAVEMMHTSMPRYDVERFGVAPRASPRQSDVMIVAGTLTNKMAPALRKVYDQMPEPRYVISMGSCANGGGYYHYSYSVVRGCDRIVPVDIYVPGCPPTAEALLYGILQLQRKIRRTGTITR.

Cysteine 55, cysteine 56, cysteine 120, and cysteine 150 together coordinate [4Fe-4S] cluster.

It belongs to the complex I 20 kDa subunit family. In terms of assembly, NDH-1 is composed of 14 different subunits. Subunits NuoB, C, D, E, F, and G constitute the peripheral sector of the complex. The cofactor is [4Fe-4S] cluster.

It is found in the cell inner membrane. The catalysed reaction is a quinone + NADH + 5 H(+)(in) = a quinol + NAD(+) + 4 H(+)(out). In terms of biological role, NDH-1 shuttles electrons from NADH, via FMN and iron-sulfur (Fe-S) centers, to quinones in the respiratory chain. Couples the redox reaction to proton translocation (for every two electrons transferred, four hydrogen ions are translocated across the cytoplasmic membrane), and thus conserves the redox energy in a proton gradient. This Cereibacter sphaeroides (strain ATCC 17029 / ATH 2.4.9) (Rhodobacter sphaeroides) protein is NADH-quinone oxidoreductase subunit B 1.